The primary structure comprises 445 residues: Trimethylamine monooxygenase (445 aa).

6 residues coordinate FAD: Ser14, Glu39, Gln41, Leu47, Trp48, and His64. Positions 72 and 74 each coordinate NADP(+). Residues Asn74 and Val127 each contribute to the FAD site. NADP(+) contacts are provided by Thr204, Ser205, Ser207, and Arg228. Residues Gln317 and Thr320 each coordinate FAD. Residue Arg411 coordinates NADP(+).

It belongs to the FMO family. The cofactor is FAD.

The enzyme catalyses trimethylamine + NADPH + O2 = trimethylamine N-oxide + NADP(+) + H2O. Catalyzes the oxidation of trimethylamine (TMA) to produce trimethylamine N-oxide (TMAO). In vitro, has a broad substrate specificity, oxidizing many nitrogen- and sulfur-containing compounds, including dimethylamine (DMA), dimethylsulfide (DMS) and dimethylsulfoxide (DMSO). This chain is Trimethylamine monooxygenase, found in Roseovarius sp. (strain 217).